We begin with the raw amino-acid sequence, 126 residues long: Holo-[acyl-carrier-protein] synthase (126 aa).

Residues Asp8 and Glu50 each coordinate Mg(2+).

The protein belongs to the P-Pant transferase superfamily. AcpS family. The cofactor is Mg(2+).

The protein localises to the cytoplasm. It catalyses the reaction apo-[ACP] + CoA = holo-[ACP] + adenosine 3',5'-bisphosphate + H(+). In terms of biological role, transfers the 4'-phosphopantetheine moiety from coenzyme A to a Ser of acyl-carrier-protein. The protein is Holo-[acyl-carrier-protein] synthase of Micrococcus luteus (strain ATCC 4698 / DSM 20030 / JCM 1464 / CCM 169 / CCUG 5858 / IAM 1056 / NBRC 3333 / NCIMB 9278 / NCTC 2665 / VKM Ac-2230) (Micrococcus lysodeikticus).